A 659-amino-acid polypeptide reads, in one-letter code: UvrABC system protein B (659 aa).

The Helicase ATP-binding domain occupies 25 to 412 (QSIENGNRGQ…SEIVAEQIIR (388 aa)). Residue 38-45 (GVTGSGKT) participates in ATP binding. A Beta-hairpin motif is present at residues 91–114 (YYDYYQPEAYVPQTDTFIEKDASI). The 154-residue stretch at 429–582 (QIDDLYGEIQ…QMEYNEEHNI (154 aa)) folds into the Helicase C-terminal domain. Residues 622 to 657 (EKLIEQYEEEMKEAAKNLQFERAAELRDIIKDLKEN) form the UVR domain.

Belongs to the UvrB family. As to quaternary structure, forms a heterotetramer with UvrA during the search for lesions. Interacts with UvrC in an incision complex.

It localises to the cytoplasm. The UvrABC repair system catalyzes the recognition and processing of DNA lesions. A damage recognition complex composed of 2 UvrA and 2 UvrB subunits scans DNA for abnormalities. Upon binding of the UvrA(2)B(2) complex to a putative damaged site, the DNA wraps around one UvrB monomer. DNA wrap is dependent on ATP binding by UvrB and probably causes local melting of the DNA helix, facilitating insertion of UvrB beta-hairpin between the DNA strands. Then UvrB probes one DNA strand for the presence of a lesion. If a lesion is found the UvrA subunits dissociate and the UvrB-DNA preincision complex is formed. This complex is subsequently bound by UvrC and the second UvrB is released. If no lesion is found, the DNA wraps around the other UvrB subunit that will check the other stand for damage. This is UvrABC system protein B from Clostridium perfringens (strain 13 / Type A).